A 341-amino-acid chain; its full sequence is Ketol-acid reductoisomerase (NADP(+)) (341 aa).

The KARI N-terminal Rossmann domain occupies 2-181 (VKVYYNGDAN…GSARAGVIET (180 aa)). Residues 25–28 (YGSQ), Arg48, Ser52, and 82–85 (DEHQ) each bind NADP(+). His107 is an active-site residue. Residue Gly133 participates in NADP(+) binding. The 146-residue stretch at 182–327 (TFKEETETDL…RELRKMMPFV (146 aa)) folds into the KARI C-terminal knotted domain. Residues Asp190, Glu194, Glu226, and Glu230 each contribute to the Mg(2+) site. A substrate-binding site is contributed by Ser251.

Belongs to the ketol-acid reductoisomerase family. Mg(2+) is required as a cofactor.

It catalyses the reaction (2R)-2,3-dihydroxy-3-methylbutanoate + NADP(+) = (2S)-2-acetolactate + NADPH + H(+). The catalysed reaction is (2R,3R)-2,3-dihydroxy-3-methylpentanoate + NADP(+) = (S)-2-ethyl-2-hydroxy-3-oxobutanoate + NADPH + H(+). It functions in the pathway amino-acid biosynthesis; L-isoleucine biosynthesis; L-isoleucine from 2-oxobutanoate: step 2/4. The protein operates within amino-acid biosynthesis; L-valine biosynthesis; L-valine from pyruvate: step 2/4. Functionally, involved in the biosynthesis of branched-chain amino acids (BCAA). Catalyzes an alkyl-migration followed by a ketol-acid reduction of (S)-2-acetolactate (S2AL) to yield (R)-2,3-dihydroxy-isovalerate. In the isomerase reaction, S2AL is rearranged via a Mg-dependent methyl migration to produce 3-hydroxy-3-methyl-2-ketobutyrate (HMKB). In the reductase reaction, this 2-ketoacid undergoes a metal-dependent reduction by NADPH to yield (R)-2,3-dihydroxy-isovalerate. This Anoxybacillus flavithermus (strain DSM 21510 / WK1) protein is Ketol-acid reductoisomerase (NADP(+)).